We begin with the raw amino-acid sequence, 203 residues long: Small ribosomal subunit protein uS4 (203 aa).

Positions 93 to 154 constitute an S4 RNA-binding domain; it reads CRFDNVVFRA…KSRNMDAVRN (62 aa).

It belongs to the universal ribosomal protein uS4 family. As to quaternary structure, part of the 30S ribosomal subunit. Contacts protein S5. The interaction surface between S4 and S5 is involved in control of translational fidelity.

One of the primary rRNA binding proteins, it binds directly to 16S rRNA where it nucleates assembly of the body of the 30S subunit. Functionally, with S5 and S12 plays an important role in translational accuracy. The protein is Small ribosomal subunit protein uS4 of Chloroherpeton thalassium (strain ATCC 35110 / GB-78).